The following is an 81-amino-acid chain: Short neurotoxin B (81 aa).

The N-terminal stretch at 1 to 21 (MKTLLLTLVVVTIVCLDLGYT) is a signal peptide. 4 disulfide bridges follow: Cys24–Cys43, Cys38–Cys60, Cys62–Cys73, and Cys74–Cys79.

Belongs to the three-finger toxin family. Short-chain subfamily. Type I alpha-neurotoxin sub-subfamily. As to expression, expressed by the venom gland.

The protein resides in the secreted. Binds to muscle nicotinic acetylcholine receptor (nAChR) and inhibit acetylcholine from binding to the receptor, thereby impairing neuromuscular transmission. In Aipysurus laevis (Olive sea snake), this protein is Short neurotoxin B.